A 93-amino-acid chain; its full sequence is Bombyxin-related peptide B (93 aa).

An N-terminal signal peptide occupies residues 1-21; sequence MKFVLVLVSLALLVSLASVQG. 3 disulfide bridges follow: Cys25-Cys80, Cys37-Cys93, and Cys79-Cys84. Residues 47 to 71 constitute a propeptide, c peptide like; sequence SGAMGAAAMYGTRGWRWAAMGGNRG.

It belongs to the insulin family. Heterodimer of a B chain and an A chain linked by two disulfide bonds. As to expression, located in 4 pairs of medial neurosecretory cells in the brain.

It localises to the secreted. The chain is Bombyxin-related peptide B from Agrius convolvuli (Convolvulus hawk-moth).